A 252-amino-acid polypeptide reads, in one-letter code: tRNA-cytidine(32) 2-sulfurtransferase (252 aa).

A PP-loop motif motif is present at residues 37 to 42 (SGGKDS). Residues cysteine 112, cysteine 115, and cysteine 202 each contribute to the [4Fe-4S] cluster site.

The protein belongs to the TtcA family. In terms of assembly, homodimer. The cofactor is Mg(2+). [4Fe-4S] cluster is required as a cofactor.

The protein resides in the cytoplasm. The enzyme catalyses cytidine(32) in tRNA + S-sulfanyl-L-cysteinyl-[cysteine desulfurase] + AH2 + ATP = 2-thiocytidine(32) in tRNA + L-cysteinyl-[cysteine desulfurase] + A + AMP + diphosphate + H(+). Its pathway is tRNA modification. Functionally, catalyzes the ATP-dependent 2-thiolation of cytidine in position 32 of tRNA, to form 2-thiocytidine (s(2)C32). The sulfur atoms are provided by the cysteine/cysteine desulfurase (IscS) system. The sequence is that of tRNA-cytidine(32) 2-sulfurtransferase from Geotalea daltonii (strain DSM 22248 / JCM 15807 / FRC-32) (Geobacter daltonii).